Consider the following 698-residue polypeptide: Polyribonucleotide nucleotidyltransferase (698 aa).

2 residues coordinate Mg(2+): aspartate 490 and aspartate 496. Positions proline 557–isoleucine 616 constitute a KH domain. The S1 motif domain occupies glycine 626–arginine 694.

It belongs to the polyribonucleotide nucleotidyltransferase family. It depends on Mg(2+) as a cofactor.

It localises to the cytoplasm. The enzyme catalyses RNA(n+1) + phosphate = RNA(n) + a ribonucleoside 5'-diphosphate. Its function is as follows. Involved in mRNA degradation. Catalyzes the phosphorolysis of single-stranded polyribonucleotides processively in the 3'- to 5'-direction. The chain is Polyribonucleotide nucleotidyltransferase from Staphylococcus aureus (strain MRSA252).